Reading from the N-terminus, the 667-residue chain is UvrABC system protein B (667 aa).

The region spanning 31-414 (KNFEAGAKAQ…EAEQTDIQVD (384 aa)) is the Helicase ATP-binding domain. An ATP-binding site is contributed by 44 to 51 (GATGTGKT). Residues 97 to 120 (YYDYYQPEAYVPSSDTYIEKDSSI) carry the Beta-hairpin motif. The Helicase C-terminal domain occupies 435-597 (QIDDLVGEIN…ITPKTIIKPI (163 aa)). The 36-residue stretch at 630–665 (LEMVERLSEQMRLAAKKLDFEQAATLRDTILELKSE) folds into the UVR domain.

The protein belongs to the UvrB family. Forms a heterotetramer with UvrA during the search for lesions. Interacts with UvrC in an incision complex.

It localises to the cytoplasm. In terms of biological role, the UvrABC repair system catalyzes the recognition and processing of DNA lesions. A damage recognition complex composed of 2 UvrA and 2 UvrB subunits scans DNA for abnormalities. Upon binding of the UvrA(2)B(2) complex to a putative damaged site, the DNA wraps around one UvrB monomer. DNA wrap is dependent on ATP binding by UvrB and probably causes local melting of the DNA helix, facilitating insertion of UvrB beta-hairpin between the DNA strands. Then UvrB probes one DNA strand for the presence of a lesion. If a lesion is found the UvrA subunits dissociate and the UvrB-DNA preincision complex is formed. This complex is subsequently bound by UvrC and the second UvrB is released. If no lesion is found, the DNA wraps around the other UvrB subunit that will check the other stand for damage. The chain is UvrABC system protein B from Latilactobacillus sakei subsp. sakei (strain 23K) (Lactobacillus sakei subsp. sakei).